Reading from the N-terminus, the 952-residue chain is Meiotic coiled-coil protein 3 (952 aa).

3 coiled-coil regions span residues 283–611, 684–716, and 839–942; these read QLLQ…KEHL, TKKF…EDKL, and SLEN…RERE.

The protein resides in the cytoplasm. Has a role in meiosis. The chain is Meiotic coiled-coil protein 3 (mcp3) from Schizosaccharomyces pombe (strain 972 / ATCC 24843) (Fission yeast).